We begin with the raw amino-acid sequence, 325 residues long: Malate dehydrogenase (325 aa).

7-13 (GSTGRVG) contacts NADP(+). Residues arginine 84 and arginine 90 each contribute to the substrate site. Residues asparagine 97 and 120–122 (VTN) contribute to the NADP(+) site. Residues asparagine 122 and arginine 153 each coordinate substrate. The active-site Proton acceptor is the histidine 177.

Belongs to the LDH/MDH superfamily.

The enzyme catalyses (S)-malate + NADP(+) = oxaloacetate + NADPH + H(+). The catalysed reaction is (S)-malate + NAD(+) = oxaloacetate + NADH + H(+). Its function is as follows. Catalyzes the reversible oxidation of malate to oxaloacetate. Can use NAD(+) and NADP(+) with similar specific activity. The protein is Malate dehydrogenase of Methanothermobacter marburgensis (strain ATCC BAA-927 / DSM 2133 / JCM 14651 / NBRC 100331 / OCM 82 / Marburg) (Methanobacterium thermoautotrophicum).